Reading from the N-terminus, the 1311-residue chain is Suppressor of presenilin protein 4 (1311 aa).

Polar residues predominate over residues 1 to 11; it reads MSSEPTSSIES. Disordered regions lie at residues 1-58 and 75-95; these read MSSE…DDLN and MFED…STAH. C2H2-type zinc fingers lie at residues 112–134 and 141–163; these read HACH…TKMH and FACE…NNIH. The interval 226-304 is disordered; it reads EFDTTPPPIL…PPPVRKDVEK (79 aa). The segment covering 280 to 293 has biased composition (low complexity); that stretch reads SPKGSLPSSSASSV. C2H2-type zinc fingers lie at residues 327–349, 355–379, 451–476, and 487–510; these read QRCP…SGGH, YICP…YILH, KKCN…VKTH, and FLCL…LIEH. Residues 544-563 are disordered; the sequence is VKEEPKEADGDESGDESFDS. A compositionally biased stretch (acidic residues) spans 552–561; it reads DGDESGDESF. C2H2-type zinc fingers lie at residues 585-607, 613-635, 709-731, 737-759, 794-816, and 823-845; these read FCCN…YDKH, FKCQ…EKLH, FQCT…KKRH, YRCV…LKQH, YCCD…HRNH, and NICS…TIIH. Positions 865–1002 are disordered; the sequence is RPVSSLTDLN…ESPEPDESVE (138 aa). The segment covering 874–897 has biased composition (basic and acidic residues); it reads NSEKMNERKSTKRKMLDKVEKMEV. Residues 898 to 907 are compositionally biased toward acidic residues; sequence GEDEEDDEES. A compositionally biased stretch (basic and acidic residues) spans 908–920; it reads VDKGTDDGDYKQR. The span at 956 to 979 shows a compositional bias: polar residues; that stretch reads NRINYSLLSKNGSGKPTPSTSSAN. 6 C2H2-type zinc fingers span residues 1022 to 1044, 1053 to 1075, 1104 to 1126, 1162 to 1184, 1190 to 1212, and 1261 to 1284; these read LKCP…RYYH, YACS…LKLH, YYCK…SAYH, KYCK…LDRH, YKCY…QLNH, and LKCP…SVHH.

Expressed in neurons.

It localises to the nucleus. Functionally, probable transcriptional regulator, which participates in the transcriptional repression of the presenilin protein hop-1. Might play a role in the oxidative stress response. This is Suppressor of presenilin protein 4 (spr-4) from Caenorhabditis elegans.